A 395-amino-acid chain; its full sequence is Phosphopentomutase (395 aa).

Mn(2+)-binding residues include D10, D294, H299, D335, H336, and H347.

The protein belongs to the phosphopentomutase family. Mn(2+) is required as a cofactor.

The protein resides in the cytoplasm. The catalysed reaction is 2-deoxy-alpha-D-ribose 1-phosphate = 2-deoxy-D-ribose 5-phosphate. It carries out the reaction alpha-D-ribose 1-phosphate = D-ribose 5-phosphate. It participates in carbohydrate degradation; 2-deoxy-D-ribose 1-phosphate degradation; D-glyceraldehyde 3-phosphate and acetaldehyde from 2-deoxy-alpha-D-ribose 1-phosphate: step 1/2. Isomerase that catalyzes the conversion of deoxy-ribose 1-phosphate (dRib-1-P) and ribose 1-phosphate (Rib-1-P) to deoxy-ribose 5-phosphate (dRib-5-P) and ribose 5-phosphate (Rib-5-P), respectively. This chain is Phosphopentomutase, found in Actinobacillus succinogenes (strain ATCC 55618 / DSM 22257 / CCUG 43843 / 130Z).